A 318-amino-acid polypeptide reads, in one-letter code: NADH-ubiquinone oxidoreductase chain 1 (318 aa).

Helical transmembrane passes span Phe2 to Leu22, Leu70 to Pro90, Phe98 to Trp118, Ile140 to Phe160, Trp173 to Thr193, Ala217 to Leu237, Glu253 to Ile273, and Leu294 to Ile314.

It belongs to the complex I subunit 1 family.

The protein localises to the mitochondrion inner membrane. It catalyses the reaction a ubiquinone + NADH + 5 H(+)(in) = a ubiquinol + NAD(+) + 4 H(+)(out). In terms of biological role, core subunit of the mitochondrial membrane respiratory chain NADH dehydrogenase (Complex I) that is believed to belong to the minimal assembly required for catalysis. Complex I functions in the transfer of electrons from NADH to the respiratory chain. The immediate electron acceptor for the enzyme is believed to be ubiquinone. The protein is NADH-ubiquinone oxidoreductase chain 1 (MT-ND1) of Sapajus apella (Brown-capped capuchin).